The sequence spans 652 residues: Leucine-rich repeat-containing protein 4 (652 aa).

The signal sequence occupies residues 1-40 (MKLLWQVTVHHTWNAVLLPVVYLTAQVWILCAAIAAAASA). Residues 41 to 74 (GPQNCPSVCSCSNQFSKVVCTRRGLSEVPQGIPS) enclose the LRRNT domain. The Extracellular portion of the chain corresponds to 41-526 (GPQNCPSVCS…SLDEVMKTTK (486 aa)). 2 disulfides stabilise this stretch: cysteine 45–cysteine 51 and cysteine 49–cysteine 60. LRR repeat units lie at residues 75–96 (NTRY…TFRH), 99–120 (HLEV…AFNG), 123–144 (SLNT…AFEY), 147–168 (KLRE…AFNR), 171–193 (SLMR…AFEG), 196–217 (NLKY…TPLV), 218–239 (GLEE…SFHG), 242–263 (SLKK…AFDG), and 266–287 (SLVE…LFTP). Asparagine 276, asparagine 321, asparagine 362, asparagine 387, asparagine 409, asparagine 433, asparagine 439, and asparagine 449 each carry an N-linked (GlcNAc...) asparagine glycan. The region spanning 299-351 (NPWNCDCDILWLAWWLREYIPTNSTCCGRCHAPMHMRGRYLVEVDQAAFQCSA) is the LRRCT domain. 2 disulfide bridges follow: cysteine 303-cysteine 328 and cysteine 305-cysteine 349. An Ig-like domain is found at 352 to 441 (PFIMDAPRDL…SNASAYLNVS (90 aa)). Cysteine 373 and cysteine 423 form a disulfide bridge. A helical membrane pass occupies residues 527 to 547 (IIIGCFVAVTLLAAAMLIVFY). At 548–652 (KLRKRHQQRS…TKDKVQETQI (105 aa)) the chain is on the cytoplasmic side.

As to quaternary structure, interacts (via LRR repeats) with NTNG2. Interacts with DLG4. Forms a complex with DLG4 and with NMDA receptors. N-glycosylated. Specifically expressed in brain. In the hippocampus, parietal cortex and piriform cortex expressed in proximal segments of CA1 pyramidal neurons.

The protein resides in the membrane. The protein localises to the postsynaptic cell membrane. In terms of biological role, synaptic adhesion protein. Regulates the formation of exitatory synapses through the recruitment of pre-and-postsynaptic proteins. Organize the lamina/pathway-specific differentiation of dendrites. Plays an important role for auditory synaptic responses. Involved in the suppression of glioma. The chain is Leucine-rich repeat-containing protein 4 (Lrrc4) from Mus musculus (Mouse).